Here is a 338-residue protein sequence, read N- to C-terminus: Ketol-acid reductoisomerase (NADP(+)) (338 aa).

The region spanning 1-181 is the KARI N-terminal Rossmann domain; the sequence is MKVYYDKDAD…GGGRTGIIET (181 aa). Residues 24-27, R47, S50, S52, and 82-85 each bind NADP(+); these read YGSQ and DEFQ. The active site involves H107. G133 provides a ligand contact to NADP(+). The 146-residue stretch at 182 to 327 folds into the KARI C-terminal knotted domain; it reads TFKDETETDL…AKLRSMMPWI (146 aa). Residues D190, E194, E226, and E230 each coordinate Mg(2+). S251 is a substrate binding site.

This sequence belongs to the ketol-acid reductoisomerase family. Mg(2+) serves as cofactor.

It carries out the reaction (2R)-2,3-dihydroxy-3-methylbutanoate + NADP(+) = (2S)-2-acetolactate + NADPH + H(+). It catalyses the reaction (2R,3R)-2,3-dihydroxy-3-methylpentanoate + NADP(+) = (S)-2-ethyl-2-hydroxy-3-oxobutanoate + NADPH + H(+). It participates in amino-acid biosynthesis; L-isoleucine biosynthesis; L-isoleucine from 2-oxobutanoate: step 2/4. Its pathway is amino-acid biosynthesis; L-valine biosynthesis; L-valine from pyruvate: step 2/4. Involved in the biosynthesis of branched-chain amino acids (BCAA). Catalyzes an alkyl-migration followed by a ketol-acid reduction of (S)-2-acetolactate (S2AL) to yield (R)-2,3-dihydroxy-isovalerate. In the isomerase reaction, S2AL is rearranged via a Mg-dependent methyl migration to produce 3-hydroxy-3-methyl-2-ketobutyrate (HMKB). In the reductase reaction, this 2-ketoacid undergoes a metal-dependent reduction by NADPH to yield (R)-2,3-dihydroxy-isovalerate. In Thiobacillus denitrificans (strain ATCC 25259 / T1), this protein is Ketol-acid reductoisomerase (NADP(+)).